A 387-amino-acid chain; its full sequence is Probable WRKY transcription factor 36 (387 aa).

The WRKY DNA-binding region spans 197–264 (CEDPSINDGC…YEGNHDHPLP (68 aa)). Positions 322–366 (RPNYPNQLPDDYPLSSSSFSLNFSSPDPPPPSSHDHTLNFSGLRT) are disordered. Positions 329-346 (LPDDYPLSSSSFSLNFSS) are enriched in low complexity.

The protein resides in the nucleus. Transcription factor. Interacts specifically with the W box (5'-(T)TGAC[CT]-3'), a frequently occurring elicitor-responsive cis-acting element. This Arabidopsis thaliana (Mouse-ear cress) protein is Probable WRKY transcription factor 36 (WRKY36).